The chain runs to 290 residues: 33 kDa chaperonin (290 aa).

Disulfide bonds link Cys-235-Cys-237 and Cys-268-Cys-271.

Belongs to the HSP33 family. Under oxidizing conditions two disulfide bonds are formed involving the reactive cysteines. Under reducing conditions zinc is bound to the reactive cysteines and the protein is inactive.

Its subcellular location is the cytoplasm. Redox regulated molecular chaperone. Protects both thermally unfolding and oxidatively damaged proteins from irreversible aggregation. Plays an important role in the bacterial defense system toward oxidative stress. In Streptococcus gordonii (strain Challis / ATCC 35105 / BCRC 15272 / CH1 / DL1 / V288), this protein is 33 kDa chaperonin.